Reading from the N-terminus, the 504-residue chain is ATP synthase subunit alpha 1 (504 aa).

172-179 (GDRQTGKT) contributes to the ATP binding site.

The protein belongs to the ATPase alpha/beta chains family. In terms of assembly, F-type ATPases have 2 components, CF(1) - the catalytic core - and CF(0) - the membrane proton channel. CF(1) has five subunits: alpha(3), beta(3), gamma(1), delta(1), epsilon(1). CF(0) has three main subunits: a(1), b(2) and c(9-12). The alpha and beta chains form an alternating ring which encloses part of the gamma chain. CF(1) is attached to CF(0) by a central stalk formed by the gamma and epsilon chains, while a peripheral stalk is formed by the delta and b chains.

The protein localises to the cell inner membrane. The catalysed reaction is ATP + H2O + 4 H(+)(in) = ADP + phosphate + 5 H(+)(out). In terms of biological role, produces ATP from ADP in the presence of a proton gradient across the membrane. The alpha chain is a regulatory subunit. The polypeptide is ATP synthase subunit alpha 1 (Rhodopirellula baltica (strain DSM 10527 / NCIMB 13988 / SH1)).